The chain runs to 325 residues: Secreted frizzled-related protein 3 (325 aa).

The signal sequence occupies residues 1–32; sequence MVCGSPGGMLLLRAGLLALAALCLLRVPGARA. In terms of domain architecture, FZ spans 33–150; sequence AACEPVRIPL…VYDRGVCISP (118 aa). 5 cysteine pairs are disulfide-bonded: cysteine 35–cysteine 96, cysteine 43–cysteine 89, cysteine 80–cysteine 119, cysteine 108–cysteine 147, and cysteine 112–cysteine 136. An N-linked (GlcNAc...) asparagine glycan is attached at asparagine 49. Residues 178 to 298 form the NTR domain; that stretch reads CKCKPIRATQ…WDMKLRHLGL (121 aa). The disordered stretch occupies residues 297 to 325; it reads GLSKSDSSNSDSTQSQKSGRNSNPRQARN. The span at 299–314 shows a compositional bias: low complexity; sequence SKSDSSNSDSTQSQKS. A compositionally biased stretch (polar residues) spans 315–325; sequence GRNSNPRQARN.

This sequence belongs to the secreted frizzled-related protein (sFRP) family. Interacts with MYOC. Expressed primarily in the cartilaginous cores of the long bone during embryonic and fetal development and in the appendicular skeleton (6-13 weeks). At 13 weeks of gestation, transcripts were present in early chondroblasts of the tarsal bones of the foot, the carpal bones of the hands and the epiphysis of long bones. Highly expressed in placenta and heart, followed by brain, skeletal muscle, kidney and pancreas. Weakly expressed in lung and liver.

It localises to the secreted. In terms of biological role, soluble frizzled-related proteins (sFRPS) function as modulators of Wnt signaling through direct interaction with Wnts. They have a role in regulating cell growth and differentiation in specific cell types. SFRP3/FRZB appears to be involved in limb skeletogenesis. Antagonist of Wnt8 signaling. Regulates chondrocyte maturation and long bone development. This is Secreted frizzled-related protein 3 (FRZB) from Homo sapiens (Human).